We begin with the raw amino-acid sequence, 240 residues long: Probable septum site-determining protein MinC (240 aa).

Belongs to the MinC family. As to quaternary structure, interacts with MinD and FtsZ.

Cell division inhibitor that blocks the formation of polar Z ring septums. Rapidly oscillates between the poles of the cell to destabilize FtsZ filaments that have formed before they mature into polar Z rings. Prevents FtsZ polymerization. This is Probable septum site-determining protein MinC from Buchnera aphidicola subsp. Cinara cedri (strain Cc).